The sequence spans 316 residues: Triplex capsid protein 2 (316 aa).

The protein belongs to the herpesviridae TRX2 protein family. Interacts with TRX1 and major capisd protein/MCP.

The protein localises to the virion. It is found in the host nucleus. In terms of biological role, structural component of the T=16 icosahedral capsid. The capsid is composed of pentamers and hexamers of major capsid protein/MCP, which are linked together by heterotrimers called triplexes. These triplexes are formed by a single molecule of triplex protein 1/TRX1 and two copies of triplex protein 2/TRX2. Additionally, TRX1 is required for efficient transport of TRX2 to the nucleus, which is the site of capsid assembly. This chain is Triplex capsid protein 2, found in Homo sapiens (Human).